A 244-amino-acid chain; its full sequence is tRNA pseudouridine synthase A (244 aa).

The active-site Nucleophile is Asp-52. Tyr-111 serves as a coordination point for substrate.

The protein belongs to the tRNA pseudouridine synthase TruA family. Homodimer.

It carries out the reaction uridine(38/39/40) in tRNA = pseudouridine(38/39/40) in tRNA. Functionally, formation of pseudouridine at positions 38, 39 and 40 in the anticodon stem and loop of transfer RNAs. This is tRNA pseudouridine synthase A from Thermosipho melanesiensis (strain DSM 12029 / CIP 104789 / BI429).